The primary structure comprises 302 residues: Oxygen-dependent coproporphyrinogen-III oxidase (302 aa).

Position 94 (Ser-94) interacts with substrate. 2 residues coordinate a divalent metal cation: His-98 and His-108. His-108 acts as the Proton donor in catalysis. Substrate is bound at residue 110-112 (NVR). A divalent metal cation-binding residues include His-147 and His-177. The tract at residues 242–277 (YVEFNLVFDRGTLFGLQSGGRAESILMSMPPVANWR) is important for dimerization. 260–262 (GGR) is a substrate binding site.

The protein belongs to the aerobic coproporphyrinogen-III oxidase family. As to quaternary structure, homodimer. The cofactor is a divalent metal cation.

It is found in the cytoplasm. It carries out the reaction coproporphyrinogen III + O2 + 2 H(+) = protoporphyrinogen IX + 2 CO2 + 2 H2O. It functions in the pathway porphyrin-containing compound metabolism; protoporphyrin-IX biosynthesis; protoporphyrinogen-IX from coproporphyrinogen-III (O2 route): step 1/1. Involved in the heme biosynthesis. Catalyzes the aerobic oxidative decarboxylation of propionate groups of rings A and B of coproporphyrinogen-III to yield the vinyl groups in protoporphyrinogen-IX. The protein is Oxygen-dependent coproporphyrinogen-III oxidase of Ralstonia pickettii (strain 12J).